An 898-amino-acid polypeptide reads, in one-letter code: Putative disease resistance protein At1g63350 (898 aa).

Residues 24–88 (VSYTHNLEKN…IESRVNDLLN (65 aa)) are a coiled coil. Positions 137–440 (DQASTSEVEE…CEEIIDGSEG (304 aa)) constitute an NB-ARC domain. 179–186 (GMGGVGKT) contributes to the ATP binding site. LRR repeat units lie at residues 516-537 (VVRR…LDCM), 538-559 (ELTT…FFNS), 562-584 (KLAV…ISEL), 586-608 (SLQY…QELK), 609-631 (KLIH…SCLH), and 632-654 (NLKV…KELE).

The protein belongs to the disease resistance NB-LRR family.

Functionally, potential disease resistance protein. In Arabidopsis thaliana (Mouse-ear cress), this protein is Putative disease resistance protein At1g63350.